The sequence spans 306 residues: PPERRKPREEGLRHCLQIGVEALKARKSPLDVVELVVRELENNEHFNAGIGSVLTNSGTVEMEASIMDGKSMKCGAVSGLSTVLNPISLARLVMEKTPHMYLAFQGAQDFAKQQGVETVDSSHFITAENVERLKLAIEANRVQIDYSQYNYTQPVQDDAEKELPVANGDSQIGTVGCVAVDSQGNLASATSTGGLVNKMVGRIGDTPLIGAGTYANELCAVSATGKGEAIIQATVARDVAALMEFKGLSLKEAADYVVHERTPKGTVGLIAVSAAGEIAMPFNTTGMFRACATEDGNSEIAIWPPA.

The Nucleophile role is filled by T174. Residues 202–205 (RIGD) and 224–227 (TGKG) contribute to the substrate site.

Belongs to the Ntn-hydrolase family. As to quaternary structure, heterotetramer of two alpha and two beta chains arranged as a dimer of alpha/beta heterodimers. Cleaved into an alpha and beta chain by autocatalysis; this activates the enzyme. The N-terminal residue of the beta subunit is responsible for the nucleophile hydrolase activity. As to expression, developing seeds.

It catalyses the reaction Cleavage of a beta-linked Asp residue from the N-terminus of a polypeptide.. Its function is as follows. Degrades proteins damaged by L-isoaspartyl residue formation (also known as beta-Asp residues). Also has L-asparaginase activity, which is used to liberate stored nitrogen during seed development. The protein is Isoaspartyl peptidase/L-asparaginase of Lupinus arboreus (Tree lupine).